Reading from the N-terminus, the 203-residue chain is Holliday junction branch migration complex subunit RuvA (203 aa).

The interval 1–63 (MIGQLSGKVD…EEHIHLYGFL (63 aa)) is domain I. Positions 64–142 (NLEEKIFFNL…KISSGSAIIK (79 aa)) are domain II. The tract at residues 143-149 (ESLNIKH) is flexible linker. Positions 150 to 203 (ITPVASNEVIKALVNLGFSRFEAQNAVQGIITQNPEISIDELIKTALKNRNSNF) are domain III.

Belongs to the RuvA family. As to quaternary structure, homotetramer. Forms an RuvA(8)-RuvB(12)-Holliday junction (HJ) complex. HJ DNA is sandwiched between 2 RuvA tetramers; dsDNA enters through RuvA and exits via RuvB. An RuvB hexamer assembles on each DNA strand where it exits the tetramer. Each RuvB hexamer is contacted by two RuvA subunits (via domain III) on 2 adjacent RuvB subunits; this complex drives branch migration. In the full resolvosome a probable DNA-RuvA(4)-RuvB(12)-RuvC(2) complex forms which resolves the HJ.

Its subcellular location is the cytoplasm. Its function is as follows. The RuvA-RuvB-RuvC complex processes Holliday junction (HJ) DNA during genetic recombination and DNA repair, while the RuvA-RuvB complex plays an important role in the rescue of blocked DNA replication forks via replication fork reversal (RFR). RuvA specifically binds to HJ cruciform DNA, conferring on it an open structure. The RuvB hexamer acts as an ATP-dependent pump, pulling dsDNA into and through the RuvAB complex. HJ branch migration allows RuvC to scan DNA until it finds its consensus sequence, where it cleaves and resolves the cruciform DNA. The polypeptide is Holliday junction branch migration complex subunit RuvA (Rickettsia africae (strain ESF-5)).